The following is a 215-amino-acid chain: Tricarboxylate transporter ALT9 (215 aa).

Solcar repeat units lie at residues 18–106 (TTVV…LAPM) and 111–197 (CGVS…VVRL). A run of 3 helical transmembrane segments spans residues 19-39 (TVVGNMVAGMCAGVAESVLVL), 112-132 (GVSTSVVAGALAGVITVYCTM), and 182-202 (VAGAIAFTLYEEVVRLTGFLV).

Belongs to the mitochondrial carrier (TC 2.A.29) family.

The protein localises to the mitochondrion inner membrane. It participates in mycotoxin biosynthesis. Functionally, tricarboxylate transporter; part of the gene cluster that mediates the biosynthesis of the host-selective toxins (HSTs) AAL-toxins, sphinganine-analog mycotoxins responsible for Alternaria stem canker on tomato by the tomato pathotype. The biosynthesis starts with the polyketide synthase ALT1-catalyzed C-16 carbon chain assembly from one starter acetyl-CoA unit with malonyl-CoA extender units. ALT1 also selectively transfers methyl groups at the first and the third cycle of chain elongation for AAL toxin. The C-16 polyketide chain is released from the enzyme by a nucleophilic attack of a carbanion, which is derived from R-carbon of glycin by decarboxylation, on the carbonyl carbon of polyketide acyl chain. This step is probably catalyzed by a pyridoxal 5'-phosphate-dependent aminoacyl transferase ALT4. The respective functions of the other enzymes encoded by the cluster have still to be elucidated. The sphingosine N-acyltransferase-like protein ALT7 seems not to act as a resistance/self-tolerance factor against the toxin in the toxin biosynthetic gene cluster, contrary to what is expected. The protein is Tricarboxylate transporter ALT9 of Alternaria alternata (Alternaria rot fungus).